A 581-amino-acid polypeptide reads, in one-letter code: Zinc metalloproteinase nas-36 (581 aa).

A propeptide spanning residues 1–95 (MKEIAHSQAY…FRGANEKGKR (95 aa)) is cleaved from the precursor. An N-linked (GlcNAc...) asparagine glycan is attached at Asn67. The Peptidase M12A domain occupies 97 to 290 (AAEYDAKWFQ…IKLINEAYCK (194 aa)). 5 cysteine pairs are disulfide-bonded: Cys137–Cys289, Cys159–Cys178, Cys293–Cys313, Cys315–Cys324, and Cys336–Cys364. His186 serves as a coordination point for Zn(2+). Residue Glu187 is part of the active site. Zn(2+) contacts are provided by His190 and His196. Residues 285-325 (NEAYCKGDCKEKNECKNGGYLNPSNCQSCLCPSGFGGSKCE) form the EGF-like domain. The CUB domain occupies 336 to 449 (CGGTLKAIID…TGFKLKFRKT (114 aa)). Asn418 carries an N-linked (GlcNAc...) asparagine glycan. The TSP type-1 domain maps to 474 to 523 (NDIWSEWGEWSQCSRSCGACGIKSRLRICKTAQCSGKVQQFLTCNLQACP). Intrachain disulfides connect Cys486–Cys517, Cys490–Cys522, and Cys502–Cys507.

The cofactor is Zn(2+).

The protein resides in the secreted. Its activity is regulated as follows. Inhibited by 1,10-phenanthroline. Functionally, metalloprotease. Involved in molting, a process during larval stages in which a new cuticle is formed and the old cuticle is shed. The sequence is that of Zinc metalloproteinase nas-36 from Brugia malayi (Filarial nematode worm).